The sequence spans 288 residues: 2-hydroxy-6-oxononadienedioate/2-hydroxy-6-oxononatrienedioate hydrolase (288 aa).

The active-site Proton acceptor is H267.

Belongs to the AB hydrolase superfamily. MhpC family. Homodimer.

It catalyses the reaction (2Z,4E)-2-hydroxy-6-oxonona-2,4-dienedioate + H2O = (2Z)-2-hydroxypenta-2,4-dienoate + succinate + H(+). The enzyme catalyses (2Z,4E,7E)-2-hydroxy-6-oxonona-2,4,7-trienedioate + H2O = (2Z)-2-hydroxypenta-2,4-dienoate + fumarate + H(+). It functions in the pathway aromatic compound metabolism; 3-phenylpropanoate degradation. In terms of biological role, catalyzes the cleavage of the C5-C6 bond of 2-hydroxy-6-oxononadienedioate and 2-hydroxy-6-oxononatrienedioate, a dienol ring fission product of the bacterial meta-cleavage pathway for degradation of phenylpropionic acid. The polypeptide is 2-hydroxy-6-oxononadienedioate/2-hydroxy-6-oxononatrienedioate hydrolase (Klebsiella pneumoniae subsp. pneumoniae (strain ATCC 700721 / MGH 78578)).